We begin with the raw amino-acid sequence, 217 residues long: Protein GrpE (217 aa).

It belongs to the GrpE family. Homodimer.

It localises to the cytoplasm. In terms of biological role, participates actively in the response to hyperosmotic and heat shock by preventing the aggregation of stress-denatured proteins, in association with DnaK and GrpE. It is the nucleotide exchange factor for DnaK and may function as a thermosensor. Unfolded proteins bind initially to DnaJ; upon interaction with the DnaJ-bound protein, DnaK hydrolyzes its bound ATP, resulting in the formation of a stable complex. GrpE releases ADP from DnaK; ATP binding to DnaK triggers the release of the substrate protein, thus completing the reaction cycle. Several rounds of ATP-dependent interactions between DnaJ, DnaK and GrpE are required for fully efficient folding. This chain is Protein GrpE, found in Mycoplasma genitalium (strain ATCC 33530 / DSM 19775 / NCTC 10195 / G37) (Mycoplasmoides genitalium).